We begin with the raw amino-acid sequence, 561 residues long: Putative cysteine ligase BshC (561 aa).

Residues 472–517 (LAQSVEKVMQSTLNQVENLKSKTIKAEKQRHNDLIAQIEKSRDNLL) adopt a coiled-coil conformation.

Belongs to the BshC family.

The protein is Putative cysteine ligase BshC of Chloroherpeton thalassium (strain ATCC 35110 / GB-78).